The chain runs to 175 residues: Movement protein (175 aa).

Residues 30-47 (ADLDDDEEVTTGQEELFL) are homodimerization. Positions 50–156 (EQAQARHLFS…QRLTSMERNG (107 aa)) are RNA-binding. Disordered stretches follow at residues 58 to 89 (FSRK…MEYS) and 103 to 175 (SSSP…VLHR). Over residues 63–74 (ISREVPADESRS) the composition is skewed to basic and acidic residues. Phosphoserine is present on residues Ser64 and Ser133. 2 stretches are compositionally biased toward polar residues: residues 115 to 141 (PSLT…SQSP) and 148 to 169 (RLTS…SSTK).

This sequence belongs to the polerovirus movement protein family. In terms of assembly, homodimer. In terms of processing, phosphorylated.

Its subcellular location is the host cell junction. It is found in the host plasmodesma. The protein resides in the host Golgi apparatus. Its function is as follows. Together with movement protein P3a, facilitates long-distance movement of virions in host. Transports viral genome to neighboring plant cells directly through plasmosdesmata, without any budding. The movement protein allows efficient cell to cell propagation, by bypassing the host cell wall barrier. Binds ssRNA. This is Movement protein from Beta vulgaris (Sugar beet).